The sequence spans 101 residues: Small ribosomal subunit protein uS14 (101 aa).

This sequence belongs to the universal ribosomal protein uS14 family. Part of the 30S ribosomal subunit. Contacts proteins S3 and S10.

In terms of biological role, binds 16S rRNA, required for the assembly of 30S particles and may also be responsible for determining the conformation of the 16S rRNA at the A site. The polypeptide is Small ribosomal subunit protein uS14 (Serratia proteamaculans (strain 568)).